The following is a 204-amino-acid chain: Urease accessory protein UreG (204 aa).

12–19 serves as a coordination point for GTP; sequence GPVGSGKT.

The protein belongs to the SIMIBI class G3E GTPase family. UreG subfamily. As to quaternary structure, homodimer. UreD, UreF and UreG form a complex that acts as a GTP-hydrolysis-dependent molecular chaperone, activating the urease apoprotein by helping to assemble the nickel containing metallocenter of UreC. The UreE protein probably delivers the nickel.

The protein resides in the cytoplasm. Functionally, facilitates the functional incorporation of the urease nickel metallocenter. This process requires GTP hydrolysis, probably effectuated by UreG. The polypeptide is Urease accessory protein UreG (Pseudomonas fluorescens (strain SBW25)).